Reading from the N-terminus, the 182-residue chain is LPS-assembly lipoprotein LptE (182 aa).

Residues 1–19 form the signal peptide; that stretch reads MRHRILTLLLGLAVLVTAG. Residue C20 is the site of N-palmitoyl cysteine attachment. C20 carries the S-diacylglycerol cysteine lipid modification.

This sequence belongs to the LptE lipoprotein family. In terms of assembly, component of the lipopolysaccharide transport and assembly complex. Interacts with LptD.

It is found in the cell outer membrane. Together with LptD, is involved in the assembly of lipopolysaccharide (LPS) at the surface of the outer membrane. Required for the proper assembly of LptD. Binds LPS and may serve as the LPS recognition site at the outer membrane. The sequence is that of LPS-assembly lipoprotein LptE from Photorhabdus laumondii subsp. laumondii (strain DSM 15139 / CIP 105565 / TT01) (Photorhabdus luminescens subsp. laumondii).